The sequence spans 200 residues: Insulin, isoform 2 (200 aa).

The segment at E148 to N200 is disordered. The segment covering A163–E174 has biased composition (pro residues). A compositionally biased stretch (low complexity) spans P175–E184.

As to expression, expressed in pancreas, eye and, to a lower extent, in limb.

This is Insulin, isoform 2 (INS-IGF2) from Homo sapiens (Human).